A 173-amino-acid polypeptide reads, in one-letter code: Small ribosomal subunit protein uS7 (173 aa).

This sequence belongs to the universal ribosomal protein uS7 family. Part of the 30S ribosomal subunit. Contacts proteins S9 and S11.

One of the primary rRNA binding proteins, it binds directly to 16S rRNA where it nucleates assembly of the head domain of the 30S subunit. Is located at the subunit interface close to the decoding center, probably blocks exit of the E-site tRNA. This Orientia tsutsugamushi (strain Ikeda) (Rickettsia tsutsugamushi) protein is Small ribosomal subunit protein uS7.